A 334-amino-acid polypeptide reads, in one-letter code: Cytosolic Fe-S cluster assembly factor NBP35 (334 aa).

[4Fe-4S] cluster contacts are provided by cysteine 33, cysteine 47, cysteine 50, and cysteine 56. 86-93 (GKGGVGKS) lines the ATP pocket. The [4Fe-4S] cluster site is built by cysteine 259 and cysteine 262.

This sequence belongs to the Mrp/NBP35 ATP-binding proteins family. NUBP1/NBP35 subfamily. As to quaternary structure, heterotetramer of 2 NBP35 and 2 CFD1 chains. It depends on [4Fe-4S] cluster as a cofactor.

It is found in the cytoplasm. It localises to the nucleus. Component of the cytosolic iron-sulfur (Fe/S) protein assembly (CIA) machinery. Required for maturation of extramitochondrial Fe-S proteins. The NBP35-CFD1 heterotetramer forms a Fe-S scaffold complex, mediating the de novo assembly of an Fe-S cluster and its transfer to target apoproteins. Required for biogenesis and export of both ribosomal subunits, which may reflect a role in assembly of the Fe/S clusters in RLI1, a protein which performs rRNA processing and ribosome export. The sequence is that of Cytosolic Fe-S cluster assembly factor NBP35 from Candida glabrata (strain ATCC 2001 / BCRC 20586 / JCM 3761 / NBRC 0622 / NRRL Y-65 / CBS 138) (Yeast).